The chain runs to 521 residues: GMP synthase [glutamine-hydrolyzing] (521 aa).

One can recognise a Glutamine amidotransferase type-1 domain in the interval 8-203 (KILILDFGAQ…VVDICGCQTL (196 aa)). The Nucleophile role is filled by cysteine 85. Residues histidine 177 and glutamate 179 contribute to the active site. The GMPS ATP-PPase domain occupies 204–396 (WTAANIIDDQ…LGLPRTMVYR (193 aa)). 231 to 237 (SGGVDSS) contributes to the ATP binding site.

Homodimer.

The enzyme catalyses XMP + L-glutamine + ATP + H2O = GMP + L-glutamate + AMP + diphosphate + 2 H(+). The protein operates within purine metabolism; GMP biosynthesis; GMP from XMP (L-Gln route): step 1/1. Functionally, catalyzes the synthesis of GMP from XMP. The polypeptide is GMP synthase [glutamine-hydrolyzing] (Xanthomonas oryzae pv. oryzae (strain MAFF 311018)).